Here is a 463-residue protein sequence, read N- to C-terminus: MNTNQIILTNQNDNSVNVWSNVTQDLYNYYGEALYNSWFSKVNFIESSLNTVILCAPTNFIRDWIKSKYSVVILQLFQHYNNAIKTVEIITKELPASNQATLELPTKTFADIGSSELNSENIFSTFDIRFTFDNFVVGAPNELAYAVARAVAESSSAVSESNPLFLYGGVGLGKTHLMHAIGWYIKQNNPSRKVIYMSAEKFMYQFVKALRNKEVMSFKEKFRSVDVLMIDDIQFICGKDSTQEEFFHTFNTLIDNNRQMVISCDRSPSDLDDIEDRIKSRLGWGLVADVHSTTYELRLGILESKIEQMNVKVPKDVIDFLASKIVSNVRELEGALNKVIAHSNFTAKEITLENTQNILRDLLRSNERIITVEDIQKKVANRYNIKLSDMSSPRRMRTIARPRQIAMYLSKILTPKSLVDIGKKFGKKDHTTVMHAIKKVEELLESDLELREEINLMMKILQN.

Residues 1–84 (MNTNQIILTN…QLFQHYNNAI (84 aa)) are domain I, interacts with DnaA modulators. The segment at 84–124 (IKTVEIITKELPASNQATLELPTKTFADIGSSELNSENIFS) is domain II. Residues 125–343 (TFDIRFTFDN…GALNKVIAHS (219 aa)) form a domain III, AAA+ region region. 4 residues coordinate ATP: G171, G173, K174, and T175. Positions 344 to 463 (NFTAKEITLE…INLMMKILQN (120 aa)) are domain IV, binds dsDNA.

It belongs to the DnaA family. In terms of assembly, oligomerizes as a right-handed, spiral filament on DNA at oriC.

The protein resides in the cytoplasm. Its function is as follows. Plays an essential role in the initiation and regulation of chromosomal replication. ATP-DnaA binds to the origin of replication (oriC) to initiate formation of the DNA replication initiation complex once per cell cycle. Binds the DnaA box (a 9 base pair repeat at the origin) and separates the double-stranded (ds)DNA. Forms a right-handed helical filament on oriC DNA; dsDNA binds to the exterior of the filament while single-stranded (ss)DNA is stabiized in the filament's interior. The ATP-DnaA-oriC complex binds and stabilizes one strand of the AT-rich DNA unwinding element (DUE), permitting loading of DNA polymerase. After initiation quickly degrades to an ADP-DnaA complex that is not apt for DNA replication. Binds acidic phospholipids. This is Chromosomal replication initiator protein DnaA from Rickettsia bellii (strain RML369-C).